Consider the following 100-residue polypeptide: UPF0251 protein VV2_0946 (100 aa).

This sequence belongs to the UPF0251 family.

The sequence is that of UPF0251 protein VV2_0946 from Vibrio vulnificus (strain CMCP6).